Consider the following 684-residue polypeptide: RNA helicase NPH-II (684 aa).

In terms of domain architecture, Helicase ATP-binding spans 184 to 359; the sequence is FRAWAARRPT…EFFPDAEFVH (176 aa). An ATP-binding site is contributed by 197 to 204; it reads GGTGVGKT. Positions 308–311 match the DEXH box motif; it reads DEVH. Positions 392 to 563 constitute a Helicase C-terminal domain; it reads NVSAALSAHR…DLYVQPSDLE (172 aa).

Belongs to the DEAD box helicase family. DEAH subfamily. As to quaternary structure, monomer.

Its subcellular location is the virion. It catalyses the reaction ATP + H2O = ADP + phosphate + H(+). In terms of biological role, NTP-dependent helicase that catalyzes unidirectional unwinding of 3'tailed duplex RNAs and plays an important role during transcription of early mRNAs, presumably by preventing R-loop formation behind the elongating RNA polymerase. Might also play a role in the export of newly synthesized mRNA chains out of the core into the cytoplasm. Required for replication and propagation of viral particles. This is RNA helicase NPH-II (NPH2) from Homo sapiens (Human).